A 475-amino-acid polypeptide reads, in one-letter code: Aspartyl/glutamyl-tRNA(Asn/Gln) amidotransferase subunit B (475 aa).

The protein belongs to the GatB/GatE family. GatB subfamily. In terms of assembly, heterotrimer of A, B and C subunits.

It catalyses the reaction L-glutamyl-tRNA(Gln) + L-glutamine + ATP + H2O = L-glutaminyl-tRNA(Gln) + L-glutamate + ADP + phosphate + H(+). It carries out the reaction L-aspartyl-tRNA(Asn) + L-glutamine + ATP + H2O = L-asparaginyl-tRNA(Asn) + L-glutamate + ADP + phosphate + 2 H(+). In terms of biological role, allows the formation of correctly charged Asn-tRNA(Asn) or Gln-tRNA(Gln) through the transamidation of misacylated Asp-tRNA(Asn) or Glu-tRNA(Gln) in organisms which lack either or both of asparaginyl-tRNA or glutaminyl-tRNA synthetases. The reaction takes place in the presence of glutamine and ATP through an activated phospho-Asp-tRNA(Asn) or phospho-Glu-tRNA(Gln). This is Aspartyl/glutamyl-tRNA(Asn/Gln) amidotransferase subunit B from Bacillus thuringiensis subsp. konkukian (strain 97-27).